Consider the following 742-residue polypeptide: Clamp-binding protein CrfC (742 aa).

A clamp-binding consensus region spans residues 41–45 (QLALP). A Dynamin-type G domain is found at 66–402 (SRLEMVLAIV…LWEDSLFAQP (337 aa)). The tract at residues 76–83 (GTMKAGKS) is G1 motif. Residues 102–104 (MTA) form a G2 motif region. Positions 236-239 (DTPG) are G3 motif. The segment at 297–300 (NKFD) is G4 motif. The G5 motif stretch occupies residues 331–334 (FPVS). Positions 440–472 (RAHGLNVACEQLRQNIHQIEESLQLLQLNQAQV) form a coiled coil.

Belongs to the TRAFAC class dynamin-like GTPase superfamily. Dynamin/Fzo/YdjA family. Forms homooligomers. Binds to the beta sliding clamp processivity factor (DnaN) in the presence and absence of DNA, may bind to the clamp itself as homodimers or trimers. Homooligomers may be able to bind more than 1 clamp complex.

It is found in the cytoplasm. Its function is as follows. Important for the colocalization of sister nascent DNA strands after replication fork passage during DNA replication, and for positioning and subsequent partitioning of sister chromosomes. Does not have GTPase activity on its own. The protein is Clamp-binding protein CrfC (crfC) of Escherichia coli (strain K12).